Reading from the N-terminus, the 243-residue chain is Complement C1q tumor necrosis factor-related protein 5 (243 aa).

The signal sequence occupies residues 1 to 15; it reads MRPLLVLLLLGLAAG. The tract at residues 15 to 125 is disordered; sequence GSPPLDDNKI…PPPSDAPLPF (111 aa). In terms of domain architecture, Collagen-like spans 30–95; it reads GHPGLPGTPG…AGPAGPTGPA (66 aa). The segment covering 83-96 has biased composition (low complexity); sequence RGEAGPAGPTGPAG. Residues 99 to 238 enclose the C1q domain; it reads SVPPRSAFSA…GFLVYSDWHS (140 aa).

In terms of assembly, may interact with ERFE. Homotrimer (via collagen-like domain). May form higher order oligomers by supercoiling of the trimers.

The protein resides in the secreted. In Homo sapiens (Human), this protein is Complement C1q tumor necrosis factor-related protein 5 (C1QTNF5).